Here is a 307-residue protein sequence, read N- to C-terminus: GTPase Era (307 aa).

The 168-residue stretch at 13–180 (RCGFVALIGA…RRALAEMVPP (168 aa)) folds into the Era-type G domain. The G1 stretch occupies residues 21–28 (GAPNVGKS). 21–28 (GAPNVGKS) lines the GTP pocket. The interval 47–51 (QTTRA) is G2. Residues 68 to 71 (DTPG) form a G3 region. GTP-binding positions include 68–72 (DTPGI) and 130–133 (NKVD). Positions 130–133 (NKVD) are G4. Positions 159–161 (ISA) are G5. In terms of domain architecture, KH type-2 spans 211–288 (LHQELPYQST…HLFLFVKVRE (78 aa)).

This sequence belongs to the TRAFAC class TrmE-Era-EngA-EngB-Septin-like GTPase superfamily. Era GTPase family. Monomer.

Its subcellular location is the cytoplasm. The protein localises to the cell inner membrane. An essential GTPase that binds both GDP and GTP, with rapid nucleotide exchange. Plays a role in 16S rRNA processing and 30S ribosomal subunit biogenesis and possibly also in cell cycle regulation and energy metabolism. The protein is GTPase Era of Bradyrhizobium sp. (strain ORS 278).